A 479-amino-acid chain; its full sequence is PRAME family member 19 (479 aa).

The stretch at 15-38 is one LRR 1 repeat; it reads QSLLRDQALAISVLDELPRELFPR. The LRR 1; degenerate repeat unit spans residues 97-124; that stretch reads RWKLQVLEMRDVDENFWTIWSGARPLSC. One copy of the LRR 2; degenerate repeat lies at 179–203; sequence HLCCTKVVNYSMNILNFRNILETVY. The stretch at 204 to 230 is one LRR 3; degenerate repeat; that stretch reads PDSIQVLEIWNMCWPCMVAEVSRYLSQ. Residues 231–265 form an LRR 4; degenerate repeat; it reads MKNLRKLFISDGCGYLPSFESQGQLVAEFSSVFLR. LRR repeat units follow at residues 266 to 291, 292 to 323, 324 to 342, 348 to 375, and 376 to 400; these read LEYL…IRCL, KSPL…SQLK, QLNL…PLRA, AATL…ALSR, and CSNL…LLRH.

Belongs to the PRAME family.

The polypeptide is PRAME family member 19 (Homo sapiens (Human)).